Here is a 296-residue protein sequence, read N- to C-terminus: Ribosomal protein L11 methyltransferase (296 aa).

The S-adenosyl-L-methionine site is built by Thr145, Gly166, Asp188, and Asn230.

This sequence belongs to the methyltransferase superfamily. PrmA family.

The protein resides in the cytoplasm. It catalyses the reaction L-lysyl-[protein] + 3 S-adenosyl-L-methionine = N(6),N(6),N(6)-trimethyl-L-lysyl-[protein] + 3 S-adenosyl-L-homocysteine + 3 H(+). Its function is as follows. Methylates ribosomal protein L11. In Histophilus somni (strain 2336) (Haemophilus somnus), this protein is Ribosomal protein L11 methyltransferase.